Consider the following 245-residue polypeptide: Orotidine 5'-phosphate decarboxylase (245 aa).

Substrate-binding positions include Asp-22, Lys-44, 71-80, Thr-131, Arg-192, Gln-201, Gly-221, and Arg-222; that span reads DLKFHDIPNT. Lys-73 acts as the Proton donor in catalysis.

It belongs to the OMP decarboxylase family. Type 1 subfamily. As to quaternary structure, homodimer.

It carries out the reaction orotidine 5'-phosphate + H(+) = UMP + CO2. It functions in the pathway pyrimidine metabolism; UMP biosynthesis via de novo pathway; UMP from orotate: step 2/2. In terms of biological role, catalyzes the decarboxylation of orotidine 5'-monophosphate (OMP) to uridine 5'-monophosphate (UMP). The chain is Orotidine 5'-phosphate decarboxylase from Escherichia fergusonii (strain ATCC 35469 / DSM 13698 / CCUG 18766 / IAM 14443 / JCM 21226 / LMG 7866 / NBRC 102419 / NCTC 12128 / CDC 0568-73).